A 297-amino-acid chain; its full sequence is Small ribosomal subunit protein uS2 (297 aa).

The tract at residues 276-297 (DWASSAPAEGWAGEAPATEAKW) is disordered.

This sequence belongs to the universal ribosomal protein uS2 family. As to quaternary structure, component of the small ribosomal subunit. Mature ribosomes consist of a small (40S) and a large (60S) subunit. The 40S subunit contains about 33 different proteins and 1 molecule of RNA (18S). The 60S subunit contains about 49 different proteins and 3 molecules of RNA (25S, 5.8S and 5S). Interacts with RPS21.

The protein resides in the cytoplasm. Functionally, required for the assembly and/or stability of the 40S ribosomal subunit. Required for the processing of the 20S rRNA-precursor to mature 18S rRNA in a late step of the maturation of 40S ribosomal subunits. The polypeptide is Small ribosomal subunit protein uS2 (Uncinocarpus reesii (strain UAMH 1704)).